The chain runs to 265 residues: Tyrosine protein kinase-interacting protein (265 aa).

The span at 1–14 shows a compositional bias: acidic residues; it reads MANEGEEIELTEFP. The disordered stretch occupies residues 1–49; sequence MANEGEEIELTEFPETEKERKDEEKLSSCSEETTDTSSSSSSDHVPAPI. The Cytoplasmic segment spans residues 1 to 238; that stretch reads MANEGEEIEL…LKRLENKVNA (238 aa). Residues 15-26 show a composition bias toward basic and acidic residues; sequence ETEKERKDEEKL. The segment covering 27–43 has biased composition (low complexity); sequence SSCSEETTDTSSSSSSD. Tyrosine 123 bears the Phosphotyrosine; by host LCK mark. Tyrosine 136 carries the phosphotyrosine; by host modification. The tract at residues 155–164 is CSKH/LBD2; it reads EDLQSFLEKY. The disordered stretch occupies residues 172-192; sequence KRDLSATWDPGMPTPALPPRP. An SH3B/LBD1 region spans residues 183–192; sequence MPTPALPPRP. Positions 183 to 192 are enriched in pro residues; it reads MPTPALPPRP. An SH3 binding region spans residues 225–234; sequence IVKDLKRLEN. The chain crosses the membrane as a helical span at residues 239–259; that stretch reads IICLVVVILAVLLLVTVLSIL. At 260-265 the chain is on the extracellular side; that stretch reads HIGMKS.

As to quaternary structure, binds host LCK, human WDR48 and human NXF1/TAP. Forms a complex with activated LCK and STAT1 and STAT3. Phosphorylation on Tyr-123 acts as a docking site for the recruitment of STATs 1 and 3.

It is found in the host cell membrane. Plays a critical role in virus induced T-cell transformation. Binds to T-cell-specific tyrosine kinase LCK SH2 and SH3 domains, thereby activating its kinase activity. Once phosphorylated by host LCK, forms a complex with at least STAT 1 and 3, resulting on the phosphorylation of STAT3 and presumably STAT1, and their migration into the nucleus to induce transcription of target genes. Stimulates host ILF3/NF-AT-90 activity. Association with host NXF1/TAP transduces the signal up-regulating surface expression of adhesion molecules as well as activating NF-kappa-B activity. Acts synergistically with StpC to stimulate NF-kappa-B activity and interleukin-2 gene expression. Activation of NF-kappa-B protects lymphocytes from apoptosis, thereby facilitating viral induced cell transformation. May cause down-regulation of host LCK and cell apoptosis when stably overexpressed ex vivo. Interaction with WDR48 induce degradation of T-cell receptor in a lysosome-dependent fashion, when both proteins are overexpressed. The biological effect of this interaction remains controversial since no T-cell receptor degradation is observed in infected cells. The polypeptide is Tyrosine protein kinase-interacting protein (Saimiriine herpesvirus 2 (strain 484) (SaHV-2)).